The chain runs to 404 residues: uncharacterized protein (404 aa).

6 helical membrane passes run 37 to 57 (LLIL…FVQF), 92 to 112 (IYNV…FVLG), 122 to 142 (LLTL…SYIP), 188 to 208 (MFYA…ILII), 230 to 250 (IGGI…TIGT), and 272 to 292 (AFFL…LGIF).

It localises to the cell membrane. This is an uncharacterized protein from Mycoplasma pneumoniae (strain ATCC 29342 / M129 / Subtype 1) (Mycoplasmoides pneumoniae).